A 156-amino-acid polypeptide reads, in one-letter code: Small ribosomal subunit protein uS7c (156 aa).

This sequence belongs to the universal ribosomal protein uS7 family. As to quaternary structure, part of the 30S ribosomal subunit.

Its subcellular location is the plastid. It is found in the chloroplast. Its function is as follows. One of the primary rRNA binding proteins, it binds directly to 16S rRNA where it nucleates assembly of the head domain of the 30S subunit. This chain is Small ribosomal subunit protein uS7c (rps7), found in Bowenia serrulata (Byfield fern).